The sequence spans 634 residues: Probable potassium transport system protein Kup (634 aa).

The next 12 membrane-spanning stretches (helical) occupy residues 21–41, 58–78, 110–130, 147–167, 179–199, 223–243, 258–278, 296–316, 348–368, 377–397, 403–423, and 427–447; these read LVIGAIGVVFGDIGTSPLYTL, VLGILSLVFWALMLVVTLKYV, MYVVGILGIFGASLFFGDGVI, APKLEPFVVPITLVVLSMLFL, AFGPITLLWFFALGAIGVYNM, WHAVFVLGAVVLAVTGGEALY, WQFVVLPMLTLTYLGQGALVL, ALYPMIVLATAATVIASQALI, IYVPAVNWCLLALVAVAVIGF, AYGVSVTGTMLITTVLMIIYA, VPAPLLWLFALVFLAVDCAFF, and IIKFLDGAWFPLLLGLILFTL.

Belongs to the HAK/KUP transporter (TC 2.A.72) family.

The protein resides in the cell inner membrane. It catalyses the reaction K(+)(in) + H(+)(in) = K(+)(out) + H(+)(out). Its function is as follows. Transport of potassium into the cell. Likely operates as a K(+):H(+) symporter. The polypeptide is Probable potassium transport system protein Kup (Xanthomonas axonopodis pv. citri (strain 306)).